Consider the following 284-residue polypeptide: Tropomyosin (284 aa).

The tract at residues Met1–Glu54 is disordered. A coiled-coil region spans residues Met1–Glu273. A compositionally biased stretch (basic and acidic residues) spans Lys12 to Ala45.

This sequence belongs to the tropomyosin family. As to quaternary structure, homodimer. Muscle (at protein level). Expressed in leg and chest protection muscle (at protein level). Expressed in claw muscle.

Its function is as follows. Tropomyosin, in association with the troponin complex, plays a central role in the calcium dependent regulation of muscle contraction. This is Tropomyosin from Eriocheir sinensis (Chinese mitten crab).